We begin with the raw amino-acid sequence, 452 residues long: Protein FAM81B (452 aa).

2 stretches are compositionally biased toward polar residues: residues 1–11 and 38–55; these read MQLQFLGTLAS and IMSS…TATA. The segment at 1 to 85 is disordered; that stretch reads MQLQFLGTLA…KVRLSPAKMS (85 aa). 2 coiled-coil regions span residues 164 to 192 and 329 to 452; these read IQTI…DQAA and LGHI…LQEV.

The protein belongs to the FAM81 family.

The sequence is that of Protein FAM81B (FAM81B) from Homo sapiens (Human).